The following is a 661-amino-acid chain: Protein WHI3 (661 aa).

The span at 14–31 (ASSSDNVVSSTTNTHNIS) shows a compositional bias: low complexity. A disordered region spans residues 14–58 (ASSSDNVVSSTTNTHNISPSHRSSLNLNTTSHPHEASGRGSASGE). Polar residues predominate over residues 32–44 (PSHRSSLNLNTTS). S231 is modified (phosphoserine). Low complexity-rich tracts occupy residues 237–272 (DPFSNDSPLSQQQSQQQQQQPQQPQQHSTQKHSPQQ), 383–409 (NTSANANASSNNGASNNGANQALSASS), and 496–508 (KNNSTTSLSSNIT). Disordered regions lie at residues 237 to 280 (DPFS…QVNS), 383 to 410 (NTSANANASSNNGASNNGANQALSASSQ), 469 to 508 (EHMYPVNQSNTPQKVPPARLSSSRNSHKNNSTTSLSSNIT), and 613 to 661 (SSKG…HIKN). The RRM domain maps to 538–625 (NTLYVGNLPS…GGIRLSFSKN (88 aa)). Residues 628 to 647 (GVRGPNSRRGGSGNPNPNVN) show a composition bias toward low complexity. Residues 648 to 661 (MLSSYNSNVGHIKN) are compositionally biased toward polar residues.

Involved in size control and cell cycle. This Saccharomyces cerevisiae (strain ATCC 204508 / S288c) (Baker's yeast) protein is Protein WHI3 (WHI3).